A 485-amino-acid chain; its full sequence is Vacuolar fusion protein CCZ1 homolog (485 aa).

Belongs to the CCZ1 family. Component of the Mon1-Ccz1 guanyl-nucleotide exchange factor complex made up of Mon1, Ccz1 and Bulli; the interaction of Bulli with the Mon1-Ccz1 heterodimer is mediated via the C-terminal Mic1 domain of Bulli. Mon1 and Ccz1 form a stable complex which displays Rab7 GEF activity with or without Bulli; GEF activity is enhanced by Bulli possibly by improving membrane association of the complex. Interacts with Rab5 and Rab7; preferentially binds GTP-bound Rab5 and GDP-bound Rab7.

The protein resides in the cytoplasm. Its subcellular location is the cytosol. The Rab7 guanyl-nucleotide exchange factor (GEF) activity of the Mon1-Ccz1 complex is autoinhibited by the N-terminal disordered region of Mon1. GEF activity is stimulated by Rab5-mediated recruitment to membranes. In terms of biological role, part of the Mon1-Ccz1 guanyl-nucleotide exchange factor complex specific for Rab7 that promotes the exchange of GDP to GTP, converting Rab7 from an inactive GDP-bound form into an active GTP-bound form. Required for recruitment of Rab7 to endosomal and autophagosomal membranes to mediate endolysosomal and autolysosomal vesicle maturation. Required for fusion of multivesicular bodies and lysosomes but not their formation or trafficking. Involved in the replacement of Rab5 (and possibly Rab4) with Rab7, also known as Rab conversion or the Rab cascade, during endosomal maturation. The Mon1-Ccz1 complex is recruited to phosphatidylinositol 3-phosphate (PtdIns[3]P) enriched membranes by Rab5, which stimulates recruitment and guanyl-nucleotide exchange of Rab7. Together with Rab7 required for autolysosome formation in fat cells and autophagic degradation during starvation-induced basal and developmental autophagy. The protein is Vacuolar fusion protein CCZ1 homolog of Drosophila melanogaster (Fruit fly).